The following is a 367-amino-acid chain: Alginate lyase (367 aa).

The signal sequence occupies residues 1 to 24 (MTIINRKTAPALLALALFGGAAQA). Residues 63 to 64 (SK), 136 to 137 (HT), and Tyr254 each bind substrate.

The protein belongs to the polysaccharide lyase 5 family.

It localises to the periplasm. It carries out the reaction Eliminative cleavage of alginate to give oligosaccharides with 4-deoxy-alpha-L-erythro-hex-4-enuronosyl groups at their non-reducing ends and beta-D-mannuronate at their reducing end.. In terms of biological role, catalyzes the depolymerization of alginate by cleaving the beta-1,4 glycosidic bond between two adjacent sugar residues via a beta-elimination mechanism. May serve to degrade mislocalized alginate that is trapped in the periplasmic space. The sequence is that of Alginate lyase from Pseudomonas entomophila (strain L48).